Reading from the N-terminus, the 670-residue chain is DNA ligase (670 aa).

NAD(+)-binding positions include aspartate 33 to aspartate 37, serine 82 to leucine 83, and glutamate 114. Lysine 116 functions as the N6-AMP-lysine intermediate in the catalytic mechanism. Residues arginine 137, glutamate 174, lysine 291, and lysine 315 each contribute to the NAD(+) site. Zn(2+) contacts are provided by cysteine 409, cysteine 412, cysteine 427, and cysteine 433. One can recognise a BRCT domain in the interval glycine 593 to lysine 670.

This sequence belongs to the NAD-dependent DNA ligase family. LigA subfamily. Mg(2+) serves as cofactor. Mn(2+) is required as a cofactor.

The enzyme catalyses NAD(+) + (deoxyribonucleotide)n-3'-hydroxyl + 5'-phospho-(deoxyribonucleotide)m = (deoxyribonucleotide)n+m + AMP + beta-nicotinamide D-nucleotide.. DNA ligase that catalyzes the formation of phosphodiester linkages between 5'-phosphoryl and 3'-hydroxyl groups in double-stranded DNA using NAD as a coenzyme and as the energy source for the reaction. It is essential for DNA replication and repair of damaged DNA. The chain is DNA ligase from Vibrio campbellii (strain ATCC BAA-1116).